The chain runs to 205 residues: Ribosomal RNA small subunit methyltransferase G (205 aa).

Residues Gly71, Phe76, 120–121 (IE), and Arg134 contribute to the S-adenosyl-L-methionine site.

It belongs to the methyltransferase superfamily. RNA methyltransferase RsmG family.

The protein localises to the cytoplasm. It carries out the reaction guanosine(527) in 16S rRNA + S-adenosyl-L-methionine = N(7)-methylguanosine(527) in 16S rRNA + S-adenosyl-L-homocysteine. Functionally, specifically methylates the N7 position of guanine in position 527 of 16S rRNA. This is Ribosomal RNA small subunit methyltransferase G from Paramagnetospirillum magneticum (strain ATCC 700264 / AMB-1) (Magnetospirillum magneticum).